The sequence spans 177 residues: Large ribosomal subunit protein uL6 (177 aa).

The protein belongs to the universal ribosomal protein uL6 family. In terms of assembly, part of the 50S ribosomal subunit.

Its function is as follows. This protein binds to the 23S rRNA, and is important in its secondary structure. It is located near the subunit interface in the base of the L7/L12 stalk, and near the tRNA binding site of the peptidyltransferase center. The chain is Large ribosomal subunit protein uL6 from Bordetella bronchiseptica (strain ATCC BAA-588 / NCTC 13252 / RB50) (Alcaligenes bronchisepticus).